The sequence spans 153 residues: 3-hydroxyacyl-[acyl-carrier-protein] dehydratase FabZ (153 aa).

His-54 is a catalytic residue.

This sequence belongs to the thioester dehydratase family. FabZ subfamily.

The protein resides in the cytoplasm. It carries out the reaction a (3R)-hydroxyacyl-[ACP] = a (2E)-enoyl-[ACP] + H2O. Its function is as follows. Involved in unsaturated fatty acids biosynthesis. Catalyzes the dehydration of short chain beta-hydroxyacyl-ACPs and long chain saturated and unsaturated beta-hydroxyacyl-ACPs. The polypeptide is 3-hydroxyacyl-[acyl-carrier-protein] dehydratase FabZ (Chlamydia pneumoniae (Chlamydophila pneumoniae)).